The sequence spans 276 residues: Probable endonuclease 4 (276 aa).

Zn(2+) contacts are provided by H66, H106, E141, D175, H178, H210, D223, H225, and E255.

This sequence belongs to the AP endonuclease 2 family. Zn(2+) serves as cofactor.

The enzyme catalyses Endonucleolytic cleavage to 5'-phosphooligonucleotide end-products.. Endonuclease IV plays a role in DNA repair. It cleaves phosphodiester bonds at apurinic or apyrimidinic (AP) sites, generating a 3'-hydroxyl group and a 5'-terminal sugar phosphate. This chain is Probable endonuclease 4, found in Heliobacterium modesticaldum (strain ATCC 51547 / Ice1).